Here is a 417-residue protein sequence, read N- to C-terminus: UDP-N-acetylglucosamine 1-carboxyvinyltransferase (417 aa).

22–23 (KN) serves as a coordination point for phosphoenolpyruvate. A UDP-N-acetyl-alpha-D-glucosamine-binding site is contributed by R91. Residue C115 is the Proton donor of the active site. C115 bears the 2-(S-cysteinyl)pyruvic acid O-phosphothioketal mark. UDP-N-acetyl-alpha-D-glucosamine-binding positions include 120–124 (RPVDQ), D304, and I326.

It belongs to the EPSP synthase family. MurA subfamily.

Its subcellular location is the cytoplasm. It carries out the reaction phosphoenolpyruvate + UDP-N-acetyl-alpha-D-glucosamine = UDP-N-acetyl-3-O-(1-carboxyvinyl)-alpha-D-glucosamine + phosphate. Its pathway is cell wall biogenesis; peptidoglycan biosynthesis. Cell wall formation. Adds enolpyruvyl to UDP-N-acetylglucosamine. The protein is UDP-N-acetylglucosamine 1-carboxyvinyltransferase of Desulfovibrio desulfuricans (strain ATCC 27774 / DSM 6949 / MB).